A 209-amino-acid polypeptide reads, in one-letter code: Large ribosomal subunit protein uL3 (209 aa).

The segment at 118–151 (GFQGAIKRHGQSRGPMSHGSRYHRRPGSMGPVAP) is disordered.

This sequence belongs to the universal ribosomal protein uL3 family. Part of the 50S ribosomal subunit. Forms a cluster with proteins L14 and L19.

One of the primary rRNA binding proteins, it binds directly near the 3'-end of the 23S rRNA, where it nucleates assembly of the 50S subunit. The protein is Large ribosomal subunit protein uL3 of Enterococcus faecalis (strain ATCC 700802 / V583).